Consider the following 245-residue polypeptide: 2,3-bisphosphoglycerate-dependent phosphoglycerate mutase (245 aa).

Residues 8 to 15, 21 to 22, R60, 87 to 90, K98, 114 to 115, and 183 to 184 each bind substrate; these read RHGQSLWN, TG, ERHY, RR, and GN. The Tele-phosphohistidine intermediate role is filled by H9. Catalysis depends on E87, which acts as the Proton donor/acceptor.

The protein belongs to the phosphoglycerate mutase family. BPG-dependent PGAM subfamily.

The enzyme catalyses (2R)-2-phosphoglycerate = (2R)-3-phosphoglycerate. The protein operates within carbohydrate degradation; glycolysis; pyruvate from D-glyceraldehyde 3-phosphate: step 3/5. Catalyzes the interconversion of 2-phosphoglycerate and 3-phosphoglycerate. This chain is 2,3-bisphosphoglycerate-dependent phosphoglycerate mutase, found in Bacillus mycoides (strain KBAB4) (Bacillus weihenstephanensis).